We begin with the raw amino-acid sequence, 540 residues long: Zinc transporter ZIP5 (540 aa).

Residues 1-20 form the signal peptide; sequence MMGSPVSHLLAGFCVWVVLG. The Extracellular segment spans residues 21–212; the sequence is WVGGSVPNLG…PAPPGDLLSA (192 aa). A glycan (N-linked (GlcNAc...) asparagine) is linked at Asn-50. Positions 78–101 are disordered; sequence HGPLTGRAASPAADNSTHRPQNPE. Residues 90–101 are compositionally biased toward polar residues; the sequence is ADNSTHRPQNPE. A glycan (N-linked (GlcNAc...) asparagine) is linked at Asn-160. Residues 213-233 traverse the membrane as a helical segment; that stretch reads LLQSALAVLLLSLPSPLSLLL. Residues 234–244 are Cytoplasmic-facing; it reads LRLLGPRLLRP. A helical membrane pass occupies residues 245-265; that stretch reads LLGFLGALAVGTLCGDALLHL. Residues 266 to 287 lie on the Extracellular side of the membrane; the sequence is LPHAQEGRHAGPGGLPEKDLGP. A helical membrane pass occupies residues 288–308; the sequence is GLSVLGGLFLLFVLENMLGLL. At 309 to 444 the chain is on the cytoplasmic side; the sequence is RHRGLRPRCC…LLQSGLSFRR (136 aa). A disordered region spans residues 324–377; the sequence is NLETRNLDPENGSGMALQPLQAAPEPGAQGQREKNSQHPPALAPPGHQGHSHGH. Phosphoserine is present on Ser-336. Residue His-375 is modified to Pros-methylhistidine. A helical transmembrane segment spans residues 445 to 465; the sequence is LLLLSLVSGALGLGGAVLGVG. Residues 466 to 470 lie on the Extracellular side of the membrane; sequence LSLGP. Residues 471–491 form a helical membrane-spanning segment; that stretch reads VPLTPWVFGVTAGVFLYVALV. Residues 492 to 508 lie on the Cytoplasmic side of the membrane; that stretch reads DMLPALLRPPEPLPTPH. The chain crosses the membrane as a helical span at residues 509 to 529; the sequence is VLLQGLGLLLGGGLMLAITLL. The Extracellular portion of the chain corresponds to 530-540; the sequence is EERLLPVTTEG.

It belongs to the ZIP transporter (TC 2.A.5) family. In terms of assembly, homodimer. Post-translationally, methylated at His-375 by METTL9. In terms of processing, N-Glycosylated. In terms of tissue distribution, expressed in liver, kidney, pancreas, small intestine, colon, spleen, fetal liver and fetal kidney.

It is found in the basolateral cell membrane. The enzyme catalyses Zn(2+)(in) = Zn(2+)(out). Functionally, uniporter that transports zinc(2+) into polarized cells of enterocytes, pancreatic acinar and endoderm cells across the basolateral membrane and participates, notably, in zinc excretion from the intestine by the uptake of zinc from the blood into the intestine. The transport mechanism is temperature- and concentration-dependent and saturable. In addition, is also a high affinity copper transporter in vitro. Also may regulate glucose-stimulated insulin secretion (GSIS) in islets primarily through the zinc-activated SIRT1-PPARGC1A axis. Could regulate the BMP/TGF-beta (bone morphogenetic protein/transforming growth factor-beta) signaling pathway and modulates extracellular matrix (ECM) proteins of the sclera. Plays a role in eye development. This is Zinc transporter ZIP5 from Homo sapiens (Human).